A 517-amino-acid chain; its full sequence is Methionine aminopeptidase 1b (517 aa).

The segment at 74 to 94 is disordered; the sequence is YCNKENSNNNNNNNNNNNNNL. The span at 79–94 shows a compositional bias: low complexity; that stretch reads NSNNNNNNNNNNNNNL. The C6H2-type zinc-finger motif lies at 114 to 166; the sequence is ENLCSGCKKVLIKKLSCPICLKNKIFSYFCNQECFKGSWKEHQKIHENMNKEN. The Zn(2+) site is built by Cys117, Cys120, Cys130, Cys133, Cys143, Cys147, His155, and His159. His325 serves as a coordination point for a protein. Residues Asp342, Asp353, and His419 each coordinate Zn(2+). An a protein-binding site is contributed by His426. Zn(2+) is bound by residues Glu452 and Glu483.

This sequence belongs to the peptidase M24A family. Methionine aminopeptidase type 1 subfamily. Associates with the 60S ribosomal subunit of the 80S translational complex. Zn(2+) is required as a cofactor. It depends on Co(2+) as a cofactor. The cofactor is Mn(2+). Requires Fe(2+) as cofactor.

It is found in the cytoplasm. It carries out the reaction Release of N-terminal amino acids, preferentially methionine, from peptides and arylamides.. With respect to regulation, inhibited by pyrimidine derivative XC11. Its function is as follows. Cotranslationally removes the N-terminal methionine from nascent proteins. The N-terminal methionine is often cleaved when the second residue in the primary sequence is small and uncharged (Met-Ala-, Cys, Gly, Pro, Ser, Thr, or Val). May play an important role in parasite growth during the blood asexual stage. This chain is Methionine aminopeptidase 1b, found in Plasmodium falciparum (isolate 3D7).